The following is a 307-amino-acid chain: Membrane protein insertase YidC 2 (307 aa).

Residues 1–23 (MKLTLNRILFSGLALSILFTLTG) form the signal peptide. The N-palmitoyl cysteine moiety is linked to residue Cys-24. Cys-24 is lipidated: S-diacylglycerol cysteine. A run of 5 helical transmembrane segments spans residues 58-78 (LGYGLAIIIVTIIVRTLILPL), 135-155 (LGGIGCLPLLIQMPFFSAMYF), 179-199 (VLTAIIAALYFFQSWLSMMAV), 209-225 (TMMYTMPIMMIFMSFSL), and 231-251 (LYWLVGGFFSIIQQLITTYLL). Residues 263–307 (YAKNPPKAYQSTSSRKDVTPSQNMEQANLPKKIKSNRNAGKQRKR) form a disordered region. The segment covering 271–288 (YQSTSSRKDVTPSQNMEQ) has biased composition (polar residues). Residues 293–307 (KKIKSNRNAGKQRKR) show a composition bias toward basic residues.

Belongs to the OXA1/ALB3/YidC family. Type 2 subfamily.

It is found in the cell membrane. Functionally, required for the insertion and/or proper folding and/or complex formation of integral membrane proteins into the membrane. Involved in integration of membrane proteins that insert both dependently and independently of the Sec translocase complex, as well as at least some lipoproteins. The sequence is that of Membrane protein insertase YidC 2 from Streptococcus pyogenes serotype M3 (strain ATCC BAA-595 / MGAS315).